The chain runs to 543 residues: Protein GPR108 (543 aa).

Positions 1–32 (MAVSERRGLGRGSPAEWGQRLLLVLLLGGCSG) are cleaved as a signal peptide. N-linked (GlcNAc...) asparagine glycans are attached at residues N57 and N109. Positions 149 to 186 (SKPGLPKPQATVPRKVDGGGTSAASKPKSTPAVIQGPS) are disordered. Residues N200, N204, and N228 are each glycosylated (N-linked (GlcNAc...) asparagine). Transmembrane regions (helical) follow at residues 263 to 283 (LYMV…SILC), 292 to 312 (IHWL…FHSI), 336 to 356 (LLKG…WAFI), 367 to 387 (VFGI…IIES), 401 to 421 (ILFL…VWSI), 449 to 469 (VMVI…QVAV), and 473 to 493 (WQWL…VLTG). A glycan (N-linked (GlcNAc...) asparagine) is linked at N534.

Belongs to the LU7TM family.

Its subcellular location is the golgi apparatus. The protein localises to the cis-Golgi network membrane. The protein resides in the trans-Golgi network membrane. It localises to the golgi apparatus membrane. May play a role in intracellular immune modulation by activating NF-kappaB response and attenuating Toll-like-receptor response. In terms of biological role, (Microbial infection) Plays an essential function in adeno-associated virus (AAV) transduction across multiple serotypes except AAV5. May play a critical role in mediating the endosomal virus escape or in the AAV virions trafficking from endosomes to the nucleus. The sequence is that of Protein GPR108 from Homo sapiens (Human).